The following is a 158-amino-acid chain: 2-C-methyl-D-erythritol 2,4-cyclodiphosphate synthase (158 aa).

2 residues coordinate a divalent metal cation: Asp-9 and His-11. Residues 9 to 11 (DVH) and 35 to 36 (HS) each bind 4-CDP-2-C-methyl-D-erythritol 2-phosphate. A divalent metal cation is bound at residue His-43. 4-CDP-2-C-methyl-D-erythritol 2-phosphate-binding positions include 57-59 (DIG), 62-66 (FPDTD), 133-136 (TTTE), Phe-140, and Arg-143.

Belongs to the IspF family. In terms of assembly, homotrimer. A divalent metal cation is required as a cofactor.

The enzyme catalyses 4-CDP-2-C-methyl-D-erythritol 2-phosphate = 2-C-methyl-D-erythritol 2,4-cyclic diphosphate + CMP. The protein operates within isoprenoid biosynthesis; isopentenyl diphosphate biosynthesis via DXP pathway; isopentenyl diphosphate from 1-deoxy-D-xylulose 5-phosphate: step 4/6. Involved in the biosynthesis of isopentenyl diphosphate (IPP) and dimethylallyl diphosphate (DMAPP), two major building blocks of isoprenoid compounds. Catalyzes the conversion of 4-diphosphocytidyl-2-C-methyl-D-erythritol 2-phosphate (CDP-ME2P) to 2-C-methyl-D-erythritol 2,4-cyclodiphosphate (ME-CPP) with a corresponding release of cytidine 5-monophosphate (CMP). The polypeptide is 2-C-methyl-D-erythritol 2,4-cyclodiphosphate synthase (Haemophilus influenzae (strain PittEE)).